The chain runs to 92 residues: Protein RnfH (92 aa).

Belongs to the UPF0125 (RnfH) family.

The polypeptide is Protein RnfH (Neisseria gonorrhoeae (strain NCCP11945)).